A 300-amino-acid polypeptide reads, in one-letter code: Dihydroorotate dehydrogenase B (NAD(+)), catalytic subunit (300 aa).

Residues Ser21 and 45–46 (KS) contribute to the FMN site. Substrate is bound by residues Lys45, 69-73 (NAVGL), and Asn125. Asn125 contacts FMN. The active-site Nucleophile is the Cys128. Lys163 and Ile187 together coordinate FMN. 188 to 189 (NT) contributes to the substrate binding site. FMN contacts are provided by residues Gly213, 239–240 (GG), and 261–262 (GT).

It belongs to the dihydroorotate dehydrogenase family. Type 1 subfamily. Heterotetramer of 2 PyrK and 2 PyrD type B subunits. FMN is required as a cofactor.

The protein resides in the cytoplasm. It carries out the reaction (S)-dihydroorotate + NAD(+) = orotate + NADH + H(+). It functions in the pathway pyrimidine metabolism; UMP biosynthesis via de novo pathway; orotate from (S)-dihydroorotate (NAD(+) route): step 1/1. In terms of biological role, catalyzes the conversion of dihydroorotate to orotate with NAD(+) as electron acceptor. The protein is Dihydroorotate dehydrogenase B (NAD(+)), catalytic subunit (pyrD) of Thermoplasma acidophilum (strain ATCC 25905 / DSM 1728 / JCM 9062 / NBRC 15155 / AMRC-C165).